We begin with the raw amino-acid sequence, 325 residues long: MSEVALEELPGVGPATAEKLKEAGFNTVEAVAVASPSELATTAEIGESTAAKIINSARQAADIGGFETGDLVLERRKLVGKLTTGCVEFDEMMGGGIETQSITELYGEFGSGKTQVAHQLAVNVQMDKEHGGLDGSVIIIDTENTFRPERITQMVKGLSEKYGMELDPEEFLQNIHVARAYNSNHQILLVDSATDLANELKEMGKPVRLLIVDSLMAHFRAEYVGRGTLADRQQKLNKHMHGLLRFGDLFNACVVVTNQVMAKPDAFFGDPTRPVGGHIVGHTATFRLYLRKSKGEKRIIRLVDSPSLPEGEAVVAVTTAGLTDQ.

Residue 107–114 (GEFGSGKT) coordinates ATP.

The protein belongs to the eukaryotic RecA-like protein family.

Functionally, involved in DNA repair and in homologous recombination. Binds and assemble on single-stranded DNA to form a nucleoprotein filament. Hydrolyzes ATP in a ssDNA-dependent manner and promotes DNA strand exchange between homologous DNA molecules. In Methanosarcina acetivorans (strain ATCC 35395 / DSM 2834 / JCM 12185 / C2A), this protein is DNA repair and recombination protein RadA.